Here is a 147-residue protein sequence, read N- to C-terminus: UPF0735 ACT domain-containing protein GK2605 (147 aa).

The ACT domain occupies 69 to 144 (TLFFHLEDRS…FVEKVEIVGS (76 aa)).

This sequence belongs to the UPF0735 family.

This is UPF0735 ACT domain-containing protein GK2605 from Geobacillus kaustophilus (strain HTA426).